The following is a 720-amino-acid chain: Phosphoribosylformylglycinamidine synthase subunit PurL (720 aa).

Histidine 47 is a catalytic residue. Residues tyrosine 50 and lysine 89 each coordinate ATP. Glutamate 91 contacts Mg(2+). Residues 92–95 (SHNH) and arginine 114 contribute to the substrate site. Histidine 93 functions as the Proton acceptor in the catalytic mechanism. Residue aspartate 115 coordinates Mg(2+). Glutamine 238 serves as a coordination point for substrate. Aspartate 266 provides a ligand contact to Mg(2+). Position 310-312 (310-312 (ESQ)) interacts with substrate. Residues aspartate 488 and glycine 525 each contribute to the ATP site. Residue asparagine 526 participates in Mg(2+) binding. Residue serine 528 coordinates substrate.

It belongs to the FGAMS family. As to quaternary structure, monomer. Part of the FGAM synthase complex composed of 1 PurL, 1 PurQ and 2 PurS subunits.

The protein resides in the cytoplasm. It carries out the reaction N(2)-formyl-N(1)-(5-phospho-beta-D-ribosyl)glycinamide + L-glutamine + ATP + H2O = 2-formamido-N(1)-(5-O-phospho-beta-D-ribosyl)acetamidine + L-glutamate + ADP + phosphate + H(+). It participates in purine metabolism; IMP biosynthesis via de novo pathway; 5-amino-1-(5-phospho-D-ribosyl)imidazole from N(2)-formyl-N(1)-(5-phospho-D-ribosyl)glycinamide: step 1/2. Its function is as follows. Part of the phosphoribosylformylglycinamidine synthase complex involved in the purines biosynthetic pathway. Catalyzes the ATP-dependent conversion of formylglycinamide ribonucleotide (FGAR) and glutamine to yield formylglycinamidine ribonucleotide (FGAM) and glutamate. The FGAM synthase complex is composed of three subunits. PurQ produces an ammonia molecule by converting glutamine to glutamate. PurL transfers the ammonia molecule to FGAR to form FGAM in an ATP-dependent manner. PurS interacts with PurQ and PurL and is thought to assist in the transfer of the ammonia molecule from PurQ to PurL. This Cereibacter sphaeroides (strain KD131 / KCTC 12085) (Rhodobacter sphaeroides) protein is Phosphoribosylformylglycinamidine synthase subunit PurL.